A 428-amino-acid chain; its full sequence is Serine--tRNA ligase (428 aa).

235 to 237 (TAE) is an L-serine binding site. 266-268 (RSE) is a binding site for ATP. E289 contributes to the L-serine binding site. 353-356 (EISS) contacts ATP. S389 lines the L-serine pocket.

It belongs to the class-II aminoacyl-tRNA synthetase family. Type-1 seryl-tRNA synthetase subfamily. In terms of assembly, homodimer. The tRNA molecule binds across the dimer.

It localises to the cytoplasm. The enzyme catalyses tRNA(Ser) + L-serine + ATP = L-seryl-tRNA(Ser) + AMP + diphosphate + H(+). It catalyses the reaction tRNA(Sec) + L-serine + ATP = L-seryl-tRNA(Sec) + AMP + diphosphate + H(+). The protein operates within aminoacyl-tRNA biosynthesis; selenocysteinyl-tRNA(Sec) biosynthesis; L-seryl-tRNA(Sec) from L-serine and tRNA(Sec): step 1/1. Catalyzes the attachment of serine to tRNA(Ser). Is also able to aminoacylate tRNA(Sec) with serine, to form the misacylated tRNA L-seryl-tRNA(Sec), which will be further converted into selenocysteinyl-tRNA(Sec). In Shewanella baltica (strain OS155 / ATCC BAA-1091), this protein is Serine--tRNA ligase.